The sequence spans 153 residues: Large ribosomal subunit protein bL9 (153 aa).

It belongs to the bacterial ribosomal protein bL9 family.

In terms of biological role, binds to the 23S rRNA. The chain is Large ribosomal subunit protein bL9 from Blochmanniella pennsylvanica (strain BPEN).